Here is a 206-residue protein sequence, read N- to C-terminus: Small ribosomal subunit protein uS4 (206 aa).

The interval 18–46 (NIWGRPKSPVNRREYGPGQHGQRRKQKMS) is disordered. The 61-residue stretch at 94–154 (RRLDAVVYRA…EKSRQMAALL (61 aa)) folds into the S4 RNA-binding domain.

It belongs to the universal ribosomal protein uS4 family. Part of the 30S ribosomal subunit. Contacts protein S5. The interaction surface between S4 and S5 is involved in control of translational fidelity.

One of the primary rRNA binding proteins, it binds directly to 16S rRNA where it nucleates assembly of the body of the 30S subunit. Functionally, with S5 and S12 plays an important role in translational accuracy. The protein is Small ribosomal subunit protein uS4 of Dinoroseobacter shibae (strain DSM 16493 / NCIMB 14021 / DFL 12).